A 323-amino-acid polypeptide reads, in one-letter code: tRNA U34 carboxymethyltransferase (323 aa).

Carboxy-S-adenosyl-L-methionine contacts are provided by residues K91, W105, K110, G130, 152 to 154 (DPT), 181 to 182 (IE), M196, Y200, and R315.

It belongs to the class I-like SAM-binding methyltransferase superfamily. CmoB family. Homotetramer.

The catalysed reaction is carboxy-S-adenosyl-L-methionine + 5-hydroxyuridine(34) in tRNA = 5-carboxymethoxyuridine(34) in tRNA + S-adenosyl-L-homocysteine + H(+). In terms of biological role, catalyzes carboxymethyl transfer from carboxy-S-adenosyl-L-methionine (Cx-SAM) to 5-hydroxyuridine (ho5U) to form 5-carboxymethoxyuridine (cmo5U) at position 34 in tRNAs. The polypeptide is tRNA U34 carboxymethyltransferase (Shigella boydii serotype 18 (strain CDC 3083-94 / BS512)).